We begin with the raw amino-acid sequence, 1298 residues long: Phosphoribosylformylglycinamidine synthase (1298 aa).

Residues 298–328 (TAIAPFPGASTGSGGEIRDEGATGRGAKPKA) form a disordered region. ATP-binding positions include 305–316 (GASTGSGGEIRD), 384–386 (TGY), and Ala-676. Positions 677, 716, 720, and 884 each coordinate Mg(2+). Ser-886 contributes to the ATP binding site. Residues 1045-1298 (VAILREQGVN…MFRNARVWVD (254 aa)) form the Glutamine amidotransferase type-1 domain. Cys-1138 acts as the Nucleophile in catalysis. Active-site residues include His-1263 and Glu-1265.

The protein in the N-terminal section; belongs to the FGAMS family. As to quaternary structure, monomer.

It is found in the cytoplasm. It carries out the reaction N(2)-formyl-N(1)-(5-phospho-beta-D-ribosyl)glycinamide + L-glutamine + ATP + H2O = 2-formamido-N(1)-(5-O-phospho-beta-D-ribosyl)acetamidine + L-glutamate + ADP + phosphate + H(+). It functions in the pathway purine metabolism; IMP biosynthesis via de novo pathway; 5-amino-1-(5-phospho-D-ribosyl)imidazole from N(2)-formyl-N(1)-(5-phospho-D-ribosyl)glycinamide: step 1/2. In terms of biological role, phosphoribosylformylglycinamidine synthase involved in the purines biosynthetic pathway. Catalyzes the ATP-dependent conversion of formylglycinamide ribonucleotide (FGAR) and glutamine to yield formylglycinamidine ribonucleotide (FGAM) and glutamate. The polypeptide is Phosphoribosylformylglycinamidine synthase (Pseudomonas aeruginosa (strain ATCC 15692 / DSM 22644 / CIP 104116 / JCM 14847 / LMG 12228 / 1C / PRS 101 / PAO1)).